The primary structure comprises 634 residues: MSISDEEAEISESEIEDYSETPYRLLRDGTYKVKVNGQLRCPFCAGKKKQDYKYKELYAHATGVSKGSATRSALQKANHLALAMFLENELAGYAEPVPRPPVVPPQLDETEPNPHNVYVWPWMGIVVNPLKEADDKELLLDSAYWLQTLSKFKPIEVNAFWVEQDSIVGVIAKFNGDWSGFAGATELEKEFETQGSSKKEWTERSGDSESKAYGWCARADDFESQGPIGEYLSKEGQLRTVSDISQKNVQDRNTVLEELSDMIAMTNEDLNKVQYSYNRTAMSLQRVLDEKKNLHQAFADETKKMQQMSLRHIQKILYDKEKLSNELDRKMRDLESRAKQLEKHEALTELDRQKLDEDKRKSDAMNKSLQLASREQKKADESVLRLVEEHQRQKEDALNKILLLEKQLDTKQTLEMEIQELKGKLQVMKHLGDDDDEAVQKKMKEMNDELDDKKAELEGLESMNSVLMTKERQSNDEIQAARKKLIAGLTGLLGAETDIGVKRMGELDEKPFLDVCKLRYSANEAAVEAATLCSTWQENLKNPSWQPFKHEGTGDGAEEVVDEDDEQLKKLKREWGKEVHNAVKTALVEMNEYNASGRYTTPELWNFKEGRKATLKEVITFISNDIKILKRKRT.

A coiled-coil region spans residues 288-469 (LDEKKNLHQA…LESMNSVLMT (182 aa)). Over residues 349 to 364 (ELDRQKLDEDKRKSDA) the composition is skewed to basic and acidic residues. Residues 349–375 (ELDRQKLDEDKRKSDAMNKSLQLASRE) form a disordered region.

Homodimer. Interacts with IDN2 and AGO4. Forms a complex with IDN2 and FMD2/INDL2. As to expression, highly expressed in flowers and at lower levels in roots, leaves and stems.

Functionally, forms a complex with IDN2 and FDM2/IDNL2 that is required for RNA-directed DNA methylation (RdDM) and that functions at a downstream step of the RdDM pathway. Required for de novo DNA methylation and 24 nucleotide small interfering RNA (siRNA) accumulation. Binds unmethylated but not methylated DNAs through its coiled-coil domain. May bind double-stranded RNAs (dsRNAs) with 5'-overhangs through its XS domain. However, according to, FMD1 does not bind dsRNAs. The protein is Factor of DNA methylation 1 of Arabidopsis thaliana (Mouse-ear cress).